Here is a 354-residue protein sequence, read N- to C-terminus: Holliday junction branch migration complex subunit RuvB (354 aa).

Residues 1–183 (MTGDNLVSAY…FGFVAHLDFY (183 aa)) are large ATPase domain (RuvB-L). Residues arginine 23, glycine 64, lysine 67, threonine 68, serine 69, 130-132 (EDF), arginine 173, tyrosine 183, and arginine 220 each bind ATP. Threonine 68 contacts Mg(2+). Residues 184–254 (SPADLETLLN…TAQAALTVYD (71 aa)) form a small ATPAse domain (RuvB-S) region. The interval 257–354 (ALGLDRLDRA…DLFSVEPDQP (98 aa)) is head domain (RuvB-H). Residues arginine 312 and arginine 317 each contribute to the DNA site.

Belongs to the RuvB family. As to quaternary structure, homohexamer. Forms an RuvA(8)-RuvB(12)-Holliday junction (HJ) complex. HJ DNA is sandwiched between 2 RuvA tetramers; dsDNA enters through RuvA and exits via RuvB. An RuvB hexamer assembles on each DNA strand where it exits the tetramer. Each RuvB hexamer is contacted by two RuvA subunits (via domain III) on 2 adjacent RuvB subunits; this complex drives branch migration. In the full resolvosome a probable DNA-RuvA(4)-RuvB(12)-RuvC(2) complex forms which resolves the HJ.

It is found in the cytoplasm. It carries out the reaction ATP + H2O = ADP + phosphate + H(+). Functionally, the RuvA-RuvB-RuvC complex processes Holliday junction (HJ) DNA during genetic recombination and DNA repair, while the RuvA-RuvB complex plays an important role in the rescue of blocked DNA replication forks via replication fork reversal (RFR). RuvA specifically binds to HJ cruciform DNA, conferring on it an open structure. The RuvB hexamer acts as an ATP-dependent pump, pulling dsDNA into and through the RuvAB complex. RuvB forms 2 homohexamers on either side of HJ DNA bound by 1 or 2 RuvA tetramers; 4 subunits per hexamer contact DNA at a time. Coordinated motions by a converter formed by DNA-disengaged RuvB subunits stimulates ATP hydrolysis and nucleotide exchange. Immobilization of the converter enables RuvB to convert the ATP-contained energy into a lever motion, pulling 2 nucleotides of DNA out of the RuvA tetramer per ATP hydrolyzed, thus driving DNA branch migration. The RuvB motors rotate together with the DNA substrate, which together with the progressing nucleotide cycle form the mechanistic basis for DNA recombination by continuous HJ branch migration. Branch migration allows RuvC to scan DNA until it finds its consensus sequence, where it cleaves and resolves cruciform DNA. This Salinispora tropica (strain ATCC BAA-916 / DSM 44818 / JCM 13857 / NBRC 105044 / CNB-440) protein is Holliday junction branch migration complex subunit RuvB.